The primary structure comprises 112 residues: uncharacterized protein (112 aa).

To Buchnera BUsg564.

This is an uncharacterized protein from Buchnera aphidicola subsp. Acyrthosiphon pisum (strain APS) (Acyrthosiphon pisum symbiotic bacterium).